We begin with the raw amino-acid sequence, 179 residues long: Large ribosomal subunit protein uL5 (179 aa).

This sequence belongs to the universal ribosomal protein uL5 family. As to quaternary structure, part of the 50S ribosomal subunit; part of the 5S rRNA/L5/L18/L25 subcomplex. Contacts the 5S rRNA and the P site tRNA. Forms a bridge to the 30S subunit in the 70S ribosome.

This is one of the proteins that bind and probably mediate the attachment of the 5S RNA into the large ribosomal subunit, where it forms part of the central protuberance. In the 70S ribosome it contacts protein S13 of the 30S subunit (bridge B1b), connecting the 2 subunits; this bridge is implicated in subunit movement. Contacts the P site tRNA; the 5S rRNA and some of its associated proteins might help stabilize positioning of ribosome-bound tRNAs. The polypeptide is Large ribosomal subunit protein uL5 (Syntrophus aciditrophicus (strain SB)).